Reading from the N-terminus, the 210-residue chain is Outer-membrane lipoprotein LolB (210 aa).

Residues 1–26 (MSKLKIDTKRRFSLLIALVLIISLSS) form the signal peptide. C27 carries the N-palmitoyl cysteine lipid modification. The S-diacylglycerol cysteine moiety is linked to residue C27.

Belongs to the LolB family. In terms of assembly, monomer.

It localises to the cell outer membrane. In terms of biological role, plays a critical role in the incorporation of lipoproteins in the outer membrane after they are released by the LolA protein. The sequence is that of Outer-membrane lipoprotein LolB from Francisella tularensis subsp. novicida (strain U112).